Consider the following 197-residue polypeptide: Nucleoside triphosphate pyrophosphatase (197 aa).

The active-site Proton acceptor is the aspartate 72.

Belongs to the Maf family. A divalent metal cation is required as a cofactor.

Its subcellular location is the cytoplasm. It carries out the reaction a ribonucleoside 5'-triphosphate + H2O = a ribonucleoside 5'-phosphate + diphosphate + H(+). It catalyses the reaction a 2'-deoxyribonucleoside 5'-triphosphate + H2O = a 2'-deoxyribonucleoside 5'-phosphate + diphosphate + H(+). Nucleoside triphosphate pyrophosphatase. May have a dual role in cell division arrest and in preventing the incorporation of modified nucleotides into cellular nucleic acids. This chain is Nucleoside triphosphate pyrophosphatase, found in Corynebacterium glutamicum (strain R).